Reading from the N-terminus, the 1392-residue chain is DNA-directed RNA polymerase subunit beta (1392 aa).

It belongs to the RNA polymerase beta chain family. The RNAP catalytic core consists of 2 alpha, 1 beta, 1 beta' and 1 omega subunit. When a sigma factor is associated with the core the holoenzyme is formed, which can initiate transcription.

The enzyme catalyses RNA(n) + a ribonucleoside 5'-triphosphate = RNA(n+1) + diphosphate. Its function is as follows. DNA-dependent RNA polymerase catalyzes the transcription of DNA into RNA using the four ribonucleoside triphosphates as substrates. The sequence is that of DNA-directed RNA polymerase subunit beta from Neisseria meningitidis serogroup A / serotype 4A (strain DSM 15465 / Z2491).